The chain runs to 829 residues: Disintegrin and metalloproteinase domain-containing protein 23 (829 aa).

The N-terminal stretch at 1–55 (MKPPGSISRRPTLTGCSLPGASCGPGRCPAGPVPARAPPCRLLLVLLLLPALATS) is a signal peptide. Positions 56–283 (SRPRARGAAA…ELQWLRRRKR (228 aa)) are excised as a propeptide. 4 N-linked (GlcNAc...) asparagine glycosylation sites follow: N72, N92, N97, and N260. Residues 284–789 (AVNPSRGVFE…EGPKGPSATN (506 aa)) lie on the Extracellular side of the membrane. In terms of domain architecture, Peptidase M12B spans 296-493 (KYLELMIVND…GGGACLFNRP (198 aa)). 3 cysteine pairs are disulfide-bonded: C405/C488, C447/C472, and C449/C456. Positions 499–585 (PTECGNGYVE…QCPPNLHKQD (87 aa)) constitute a Disintegrin domain. N544 and N545 each carry an N-linked (GlcNAc...) asparagine glycan. A disulfide bridge links C557 with C577. N661 and N729 each carry an N-linked (GlcNAc...) asparagine glycan. The region spanning 729-766 (NMSSCPLDSRGKVCSGHGVCSNEATCICDFTWAGTDCS) is the EGF-like domain. Disulfide bonds link C733/C748, C742/C754, and C756/C765. The chain crosses the membrane as a helical span at residues 790–810 (LIIGSIAGAILVAAIVLGGTG). Over 811–829 (WGFKNVKKRRFDPTQQGPI) the chain is Cytoplasmic.

In terms of assembly, can bind to LGI1 and LGI4. As to expression, brain specific.

Its subcellular location is the cell membrane. It is found in the secreted. May play a role in cell-cell and cell-matrix interactions. This is a non-catalytic metalloprotease-like protein. The protein is Disintegrin and metalloproteinase domain-containing protein 23 (Adam23) of Mus musculus (Mouse).